Consider the following 163-residue polypeptide: Phosphopantetheine adenylyltransferase (163 aa).

Threonine 10 serves as a coordination point for substrate. ATP contacts are provided by residues 10-11 and histidine 18; that span reads TF. Lysine 42, leucine 74, and arginine 88 together coordinate substrate. Residues 89 to 91, glutamate 99, and 124 to 130 each bind ATP; these read GLR and NSFISST.

The protein belongs to the bacterial CoaD family. Homohexamer. Mg(2+) is required as a cofactor.

The protein resides in the cytoplasm. The enzyme catalyses (R)-4'-phosphopantetheine + ATP + H(+) = 3'-dephospho-CoA + diphosphate. Its pathway is cofactor biosynthesis; coenzyme A biosynthesis; CoA from (R)-pantothenate: step 4/5. Reversibly transfers an adenylyl group from ATP to 4'-phosphopantetheine, yielding dephospho-CoA (dPCoA) and pyrophosphate. This chain is Phosphopantetheine adenylyltransferase, found in Shewanella oneidensis (strain ATCC 700550 / JCM 31522 / CIP 106686 / LMG 19005 / NCIMB 14063 / MR-1).